A 536-amino-acid polypeptide reads, in one-letter code: L-ornithine N(5)-monooxygenase SIDA (536 aa).

The tract at residues Met1–Ala25 is disordered. FAD is bound by residues Glu115–His123 and Gln134. Residue Lys139 participates in L-ornithine binding. Val200 contacts FAD. Arg310 contributes to the NADP(+) binding site. Residues Asn324–Phe327 and Asn354 contribute to the L-ornithine site. Thr515–Leu517 provides a ligand contact to FAD. An L-ornithine-binding site is contributed by Ser518.

This sequence belongs to the lysine N(6)-hydroxylase/L-ornithine N(5)-oxygenase family. Homotetramer. Requires FAD as cofactor.

The enzyme catalyses L-ornithine + NADH + O2 = N(5)-hydroxy-L-ornithine + NAD(+) + H2O. The catalysed reaction is L-ornithine + NADPH + O2 = N(5)-hydroxy-L-ornithine + NADP(+) + H2O. Its pathway is siderophore biosynthesis. L-ornithine N(5)-monooxygenase; part of the gene cluster that mediates the biosynthesis of at least 11 siderophores, including beauverichelin A, dimerumic acid (DA), Na-dimethyl coprogen (NADC), eleutherazine B, ferricrocin (FC), fusarinine A, fusarinine C (FsC), metachelin A, mevalonolactone, rhodotorulic acid (RA) and tenellin. This cocktail of siderophores for iron metabolism is essential for virulence, and more specifically for the fungal virulence in penetrating through the host cuticle. Siderophore synthesis is also involved in conidial germination under iron-deficient conditions. SIDA initiates the biosynthesis of these siderophores with the enzymatic hydroxylation of ornithine. SIDA is indispensable for the production of most siderophores including fusarinine C and ferricrocin but not mevalonolactone and eleutherazine B. However, SIDA mediates the metabolic interplay between synthesis of mevalonolactone and eleutherazine B and other siderophores. The chain is L-ornithine N(5)-monooxygenase SIDA from Beauveria bassiana (strain ARSEF 2860) (White muscardine disease fungus).